The chain runs to 125 residues: Small ribosomal subunit protein uS13 (125 aa).

Belongs to the universal ribosomal protein uS13 family. As to quaternary structure, part of the 30S ribosomal subunit. Forms a loose heterodimer with protein S19. Forms two bridges to the 50S subunit in the 70S ribosome.

Functionally, located at the top of the head of the 30S subunit, it contacts several helices of the 16S rRNA. In the 70S ribosome it contacts the 23S rRNA (bridge B1a) and protein L5 of the 50S subunit (bridge B1b), connecting the 2 subunits; these bridges are implicated in subunit movement. Contacts the tRNAs in the A and P-sites. The polypeptide is Small ribosomal subunit protein uS13 (Gluconacetobacter diazotrophicus (strain ATCC 49037 / DSM 5601 / CCUG 37298 / CIP 103539 / LMG 7603 / PAl5)).